Here is a 290-residue protein sequence, read N- to C-terminus: Pyridoxal kinase PdxY (290 aa).

Substrate-binding positions include Ser9 and 44–45 (TQ). Residues Asp112, Val144, Glu149, and Lys182 each coordinate ATP. Asp221 is a binding site for substrate.

The protein belongs to the pyridoxine kinase family. PdxY subfamily. In terms of assembly, homodimer. It depends on Mg(2+) as a cofactor.

It catalyses the reaction pyridoxal + ATP = pyridoxal 5'-phosphate + ADP + H(+). It functions in the pathway cofactor metabolism; pyridoxal 5'-phosphate salvage; pyridoxal 5'-phosphate from pyridoxal: step 1/1. In terms of biological role, pyridoxal kinase involved in the salvage pathway of pyridoxal 5'-phosphate (PLP). Catalyzes the phosphorylation of pyridoxal to PLP. This Vibrio vulnificus (strain CMCP6) protein is Pyridoxal kinase PdxY.